The primary structure comprises 585 residues: Aspartate--tRNA ligase (585 aa).

E171 is a binding site for L-aspartate. The aspartate stretch occupies residues 195–198 (QLFK). Residue R217 coordinates L-aspartate. Residues 217–219 (RDE) and Q226 each bind ATP. An L-aspartate-binding site is contributed by H448. E482 is a binding site for ATP. Position 489 (R489) interacts with L-aspartate. 534-537 (GLDR) is a binding site for ATP.

The protein belongs to the class-II aminoacyl-tRNA synthetase family. Type 1 subfamily. In terms of assembly, homodimer.

It localises to the cytoplasm. The catalysed reaction is tRNA(Asp) + L-aspartate + ATP = L-aspartyl-tRNA(Asp) + AMP + diphosphate. Functionally, catalyzes the attachment of L-aspartate to tRNA(Asp) in a two-step reaction: L-aspartate is first activated by ATP to form Asp-AMP and then transferred to the acceptor end of tRNA(Asp). The chain is Aspartate--tRNA ligase from Histophilus somni (strain 129Pt) (Haemophilus somnus).